We begin with the raw amino-acid sequence, 315 residues long: Rhomboid-related protein 4 (315 aa).

The Cytoplasmic portion of the chain corresponds to 1-21; it reads MQRRTRGINTGLLLLLSQVFQ. A helical transmembrane segment spans residues 22–42; sequence IGINNIPPVTLATLAVNVWFF. Topologically, residues 43–103 are lumenal; that stretch reads LNPWKPLYHS…KLERRLGSRW (61 aa). The helical transmembrane segment at 104 to 124 threads the bilayer; sequence FAYVIATFSLLTGVVYLLLQF. The Cytoplasmic segment spans residues 125-137; it reads TVAELLNQPDFKR. A helical transmembrane segment spans residues 138–154; the sequence is NCAVGFSGVLFALKVLS. Catalysis depends on S144, which acts as the Nucleophile. Residues 155–180 lie on the Lumenal side of the membrane; it reads NHYCPGGFVNILGFPVPNRFACWAEL. A helical transmembrane segment spans residues 181–201; that stretch reads VAIHFCTPGTSFAGHLAGILV. H195 is an active-site residue. The Cytoplasmic portion of the chain corresponds to 202 to 315; it reads GLMYTQGPLK…RQRLHRFDGQ (114 aa). The ubiquitin-binding domain (UBD) stretch occupies residues 269 to 284; sequence SEEEQLERALRASIWD. Positions 301-315 are VCP/p97-interacting motif (VIM); the sequence is PEEMRRQRLHRFDGQ.

The protein belongs to the peptidase S54 family. Interacts with BIK and STEAP3. Interacts (via C-terminal domain) with VCP/P97. Interacts with ubiquitin and ubiquitinated proteins. As to expression, expressed in testis (at protein level). Expressed in intestine, lung, brain, kidney, epididymis, stomach, muscle, spleen, liver, heart and testis.

It is found in the endoplasmic reticulum membrane. It localises to the mitochondrion membrane. The enzyme catalyses Cleaves type-1 transmembrane domains using a catalytic dyad composed of serine and histidine that are contributed by different transmembrane domains.. Inhibited by aprotinin. Functionally, intramembrane-cleaving serine protease that cleaves single transmembrane or multi-pass membrane proteins in the hydrophobic plane of the membrane, luminal loops and juxtamembrane regions. Involved in regulated intramembrane proteolysis and the subsequent release of functional polypeptides from their membrane anchors. Functional component of endoplasmic reticulum-associated degradation (ERAD) for misfolded membrane proteins. Required for the degradation process of some specific misfolded endoplasmic reticulum (ER) luminal proteins. Participates in the transfer of misfolded proteins from the ER to the cytosol, where they are destroyed by the proteasome in a ubiquitin-dependent manner. Functions in BIK, MPZ, PKD1, PTCRA, RHO, STEAP3 and TRAC processing. Involved in the regulation of exosomal secretion; inhibits the TSAP6-mediated secretion pathway. Involved in the regulation of apoptosis; modulates BIK-mediated apoptotic activity. Also plays a role in the regulation of spermatogenesis; inhibits apoptotic activity in spermatogonia. In Mus musculus (Mouse), this protein is Rhomboid-related protein 4 (Rhbdd1).